The following is a 397-amino-acid chain: CCA-adding enzyme (397 aa).

The ATP site is built by G27 and R30. 2 residues coordinate CTP: G27 and R30. The Mg(2+) site is built by D40 and D42. Residues R111, D154, R157, R160, and R163 each contribute to the ATP site. CTP-binding residues include R111, D154, R157, R160, and R163.

The protein belongs to the tRNA nucleotidyltransferase/poly(A) polymerase family. Bacterial CCA-adding enzyme type 3 subfamily. In terms of assembly, homodimer. Mg(2+) serves as cofactor.

It carries out the reaction a tRNA precursor + 2 CTP + ATP = a tRNA with a 3' CCA end + 3 diphosphate. The catalysed reaction is a tRNA with a 3' CCA end + 2 CTP + ATP = a tRNA with a 3' CCACCA end + 3 diphosphate. Its function is as follows. Catalyzes the addition and repair of the essential 3'-terminal CCA sequence in tRNAs without using a nucleic acid template. Adds these three nucleotides in the order of C, C, and A to the tRNA nucleotide-73, using CTP and ATP as substrates and producing inorganic pyrophosphate. tRNA 3'-terminal CCA addition is required both for tRNA processing and repair. Also involved in tRNA surveillance by mediating tandem CCA addition to generate a CCACCA at the 3' terminus of unstable tRNAs. While stable tRNAs receive only 3'-terminal CCA, unstable tRNAs are marked with CCACCA and rapidly degraded. In Anoxybacillus flavithermus (strain DSM 21510 / WK1), this protein is CCA-adding enzyme.